Reading from the N-terminus, the 490-residue chain is ATP synthase subunit beta, chloroplastic (490 aa).

ATP is bound at residue 170 to 177; the sequence is GGXGVGKT.

The protein belongs to the ATPase alpha/beta chains family. In terms of assembly, F-type ATPases have 2 components, CF(1) - the catalytic core - and CF(0) - the membrane proton channel. CF(1) has five subunits: alpha(3), beta(3), gamma(1), delta(1), epsilon(1). CF(0) has four main subunits: a(1), b(1), b'(1) and c(9-12).

It localises to the plastid. Its subcellular location is the chloroplast thylakoid membrane. It catalyses the reaction ATP + H2O + 4 H(+)(in) = ADP + phosphate + 5 H(+)(out). Functionally, produces ATP from ADP in the presence of a proton gradient across the membrane. The catalytic sites are hosted primarily by the beta subunits. The chain is ATP synthase subunit beta, chloroplastic from Ipomoea coccinea (Scarlet morning-glory).